Reading from the N-terminus, the 311-residue chain is Methionyl-tRNA formyltransferase (311 aa).

(6S)-5,6,7,8-tetrahydrofolate is bound at residue 111–114 (SLLP).

It belongs to the Fmt family.

The catalysed reaction is L-methionyl-tRNA(fMet) + (6R)-10-formyltetrahydrofolate = N-formyl-L-methionyl-tRNA(fMet) + (6S)-5,6,7,8-tetrahydrofolate + H(+). In terms of biological role, attaches a formyl group to the free amino group of methionyl-tRNA(fMet). The formyl group appears to play a dual role in the initiator identity of N-formylmethionyl-tRNA by promoting its recognition by IF2 and preventing the misappropriation of this tRNA by the elongation apparatus. This is Methionyl-tRNA formyltransferase from Caldicellulosiruptor saccharolyticus (strain ATCC 43494 / DSM 8903 / Tp8T 6331).